Here is a 149-residue protein sequence, read N- to C-terminus: Active regulator of SIRT1 (149 aa).

The tract at residues 1–64 (MSVSLLRKGL…GLRHDQKATA (64 aa)) is disordered. The segment covering 8 to 19 (KGLDLLREERSG) has biased composition (basic and acidic residues). Residues 30–41 (SSKPKPCLSSSK) show a composition bias toward low complexity. The segment covering 43-52 (GMRKQLRRLK) has biased composition (basic residues).

The protein belongs to the AROS family. In terms of assembly, part of the small subunit (SSU) processome, composed of more than 70 proteins and the RNA chaperone small nucleolar RNA (snoRNA) U3.

The protein resides in the nucleus. The protein localises to the nucleolus. Part of the small subunit (SSU) processome, first precursor of the small eukaryotic ribosomal subunit. During the assembly of the SSU processome in the nucleolus, many ribosome biogenesis factors, an RNA chaperone and ribosomal proteins associate with the nascent pre-rRNA and work in concert to generate RNA folding, modifications, rearrangements and cleavage as well as targeted degradation of pre-ribosomal RNA by the RNA exosome. Acts as a chaperone that specifically mediates the integration of RPS19 in state post-A1. Direct regulator of SIRT1. This Xenopus tropicalis (Western clawed frog) protein is Active regulator of SIRT1 (rps19bp1).